The chain runs to 549 residues: Fumarate hydratase 1, mitochondrial (549 aa).

Residue cysteine 114 participates in [4Fe-4S] cluster binding. (S)-malate contacts are provided by residues 115 to 116 (QD), arginine 154, glycine 197, and 200 to 206 (NKSFLLQ). Residues cysteine 233 and cysteine 328 each coordinate [4Fe-4S] cluster. (S)-malate is bound by residues arginine 404, 450–454 (TTAGR), and lysine 474.

This sequence belongs to the class-I fumarase family. In terms of assembly, homodimer. The cofactor is [4Fe-4S] cluster.

It is found in the mitochondrion. It carries out the reaction (S)-malate = fumarate + H2O. It functions in the pathway carbohydrate metabolism; tricarboxylic acid cycle; (S)-malate from fumarate: step 1/1. With respect to regulation, specifically and competitively inhibited by 2-thiomalate, which coordinates with the catalytic [4Fe-4S] cluster. In terms of biological role, catalyzes the reversible hydration of fumarate to (S)-malate. Catalyzes the hydration of fumarate to L-malate in the tricarboxylic acid (TCA) cycle to facilitate a transition step in the production of energy in the form of NADH. In Leishmania major, this protein is Fumarate hydratase 1, mitochondrial.